A 311-amino-acid chain; its full sequence is Probable dihydroorotate dehydrogenase A (fumarate) (311 aa).

Substrate contacts are provided by residues lysine 45, 69–73, and asparagine 128; that span reads NSMGL. 45–46 contacts FMN; it reads KT. Asparagine 128 is a binding site for FMN. The Nucleophile role is filled by cysteine 131. Residues lysine 165 and valine 193 each contribute to the FMN site. Residue 194–195 participates in substrate binding; the sequence is NS. Residues glycine 220, 248–249, and 270–271 contribute to the FMN site; these read GG and GT.

It belongs to the dihydroorotate dehydrogenase family. Type 1 subfamily. As to quaternary structure, homodimer. FMN is required as a cofactor.

The protein resides in the cytoplasm. It carries out the reaction (S)-dihydroorotate + fumarate = orotate + succinate. Its pathway is pyrimidine metabolism; UMP biosynthesis via de novo pathway. Functionally, catalyzes the conversion of dihydroorotate to orotate with fumarate as the electron acceptor. This Streptococcus pneumoniae serotype 4 (strain ATCC BAA-334 / TIGR4) protein is Probable dihydroorotate dehydrogenase A (fumarate) (pyrDA).